A 210-amino-acid polypeptide reads, in one-letter code: Redox-sensing transcriptional repressor Rex (210 aa).

A DNA-binding region (H-T-H motif) is located at residues 17-56 (KYHRYLYELLKNDVDRISSKELSEKIGFTASQIRQDLNCF). 91-96 (GAGNIG) contacts NAD(+).

This sequence belongs to the transcriptional regulatory Rex family. Homodimer.

The protein localises to the cytoplasm. In terms of biological role, modulates transcription in response to changes in cellular NADH/NAD(+) redox state. This is Redox-sensing transcriptional repressor Rex from Clostridium botulinum (strain Loch Maree / Type A3).